A 309-amino-acid chain; its full sequence is p-hydroxybenzoic acid efflux pump subunit AaeA (309 aa).

The chain crosses the membrane as a helical span at residues 12–32 (AITVVLVILAFIAIFNAWVYY).

Belongs to the membrane fusion protein (MFP) (TC 8.A.1) family.

It localises to the cell inner membrane. Its function is as follows. Forms an efflux pump with AaeB. The sequence is that of p-hydroxybenzoic acid efflux pump subunit AaeA from Escherichia coli O157:H7.